The sequence spans 399 residues: MAGNKSVVYHGTRDLRVETVPYPKLEHNNRKLEHAVILKVVSTNICGSDQHIYRGRFIVPKGHVLGHEITGEVVEKGSDVELMDIGDLVSVPFNVACGRCRNCKEARSDVCENNLVNPDADLGAFGFDLKGWSGGQAEYVLVPYADYMLLKFGDKEQAMEKIKDLTLISDILPTGFHGCVSAGVKPGSHVYIAGAGPVGRCAAAGARLLGAACVIVGDQNPERLKLLSDAGFETIDLRNSAPLRDQIDQILGKPEVDCGVDAVGFEAHGLGDEANTETPNGALNSLFDVVRAGGAIGIPGIYVGSDPDPVNKDAGSGRLHLDFGKMWTKSIRIMTGMAPVTNYNRHLTEAILWDQMPYLSKVMNIEVITLDQAPDGYAKFDKGSPAKFVIDPHGMLKNK.

Zn(2+) is bound at residue Cys-46. Gly-47–His-51 lines the NAD(+) pocket. Positions 67, 97, 100, 103, 111, and 170 each coordinate Zn(2+). Thr-174 is a binding site for NAD(+). Position 177 (His-177) interacts with Zn(2+). NAD(+)-binding positions include Pro-197–Val-198, Asp-218–Gln-219, Arg-223, Val-263, His-268, Pro-299, Pro-299–Ile-301, and Gly-336–Ala-338.

It belongs to the zinc-containing alcohol dehydrogenase family. As to quaternary structure, homotetramer. The cofactor is Zn(2+). Requires NAD(+) as cofactor. It depends on NADH as a cofactor.

The catalysed reaction is 2 formaldehyde + H2O = methanol + formate + H(+). With respect to regulation, inhibited by the substrate analog pyrazole but not by NAD analogs such as AMP, ADP, ATP or N-methylnicotinamide chloride. Active against a range of primary alcohols as well as some secondary alcohols. Exhibits higher activity against alcohols with longer carbon chains. In Pseudomonas putida (Arthrobacter siderocapsulatus), this protein is Formaldehyde dismutase.